Consider the following 366-residue polypeptide: Growth hormone secretagogue receptor type 1 (366 aa).

The Extracellular portion of the chain corresponds to 1 to 40 (MWNATLSEEPGYNLTLPDLGWDAPADNDSLTDELLPLFPA). N-linked (GlcNAc...) asparagine glycans are attached at residues Asn3, Asn13, and Asn27. The helical transmembrane segment at 41 to 66 (PLLAGVTATCVALFVVGIAGNLLTML) threads the bilayer. The Cytoplasmic portion of the chain corresponds to 67 to 72 (VVSRFR). Residues 73 to 96 (ELRTTTNLYLSSMAFSDLLIFLCM) form a helical membrane-spanning segment. The Extracellular segment spans residues 97 to 117 (PLDLVRLWQYRPWNFGDLLCK). The cysteines at positions 116 and 198 are disulfide-linked. The chain crosses the membrane as a helical span at residues 118–139 (LFQFVSESCTYATVLTITALSV). At 140–162 (ERYFAICFPLRAKVVVTKGRVKL) the chain is on the cytoplasmic side. A helical transmembrane segment spans residues 163-183 (VILVIWAVAFCSAGPIFVLVG). Over 184 to 211 (VEHENGTDPRDTNECRATEFAVRSGLLT) the chain is Extracellular. Asn188 carries an N-linked (GlcNAc...) asparagine glycan. The helical transmembrane segment at 212 to 235 (VMVWVSSVFFFLPVFCLTVLYSLI) threads the bilayer. Residues 236–263 (GRKLWRRKRGEAAVGASLRDQNHKQTVK) are Cytoplasmic-facing. A helical transmembrane segment spans residues 264 to 285 (MLAVVVFAFILCWLPFHVGRYL). Residues 286 to 302 (FSKSFEPGSLEIAQISQ) lie on the Extracellular side of the membrane. The helical transmembrane segment at 303–326 (YCNLVSFVLFYLSAAINPILYNIM) threads the bilayer. Residues 327–366 (SKKYRVAVFKLLGFEPFSQRKLSTLKDESSRAWTETSINT) are Cytoplasmic-facing.

This sequence belongs to the G-protein coupled receptor 1 family.

The protein resides in the cell membrane. Functionally, receptor for ghrelin, coupled to G-alpha-11 proteins. Stimulates growth hormone secretion. Also binds other growth hormone releasing peptides (GHRP) (e.g. Met-enkephalin and GHRP-6) as well as non-peptide, low molecular weight secretagogues (e.g. L-692,429, MK-0677, adenosine). This Mustela putorius furo (European domestic ferret) protein is Growth hormone secretagogue receptor type 1 (GHSR).